The sequence spans 141 residues: Nucleoside triphosphatase NudI (141 aa).

Residues 1–141 (MRQRTIVCPL…RKTLRLKGLL (141 aa)) form the Nudix hydrolase domain. Positions 38–59 (GGVEPGERIEEALRREIREELG) match the Nudix box motif.

This sequence belongs to the Nudix hydrolase family. NudI subfamily. Monomer. The cofactor is Mg(2+).

It carries out the reaction a ribonucleoside 5'-triphosphate + H2O = a ribonucleoside 5'-phosphate + diphosphate + H(+). The enzyme catalyses a 2'-deoxyribonucleoside 5'-triphosphate + H2O = a 2'-deoxyribonucleoside 5'-phosphate + diphosphate + H(+). It catalyses the reaction dUTP + H2O = dUMP + diphosphate + H(+). The catalysed reaction is dTTP + H2O = dTMP + diphosphate + H(+). It carries out the reaction dCTP + H2O = dCMP + diphosphate + H(+). In terms of biological role, catalyzes the hydrolysis of nucleoside triphosphates, with a preference for pyrimidine deoxynucleoside triphosphates (dUTP, dTTP and dCTP). This is Nucleoside triphosphatase NudI from Escherichia coli O9:H4 (strain HS).